The sequence spans 270 residues: HTH-type transcriptional repressor DrrR1 (270 aa).

Residues 1 to 11 show a composition bias toward low complexity; that stretch reads MESGTSRTSDT. Residues 1-28 form a disordered region; sequence MESGTSRTSDTGGTGRAGSTETSGSGDI. The region spanning 49–109 is the HTH tetR-type domain; it reads TLTLDRVVEA…LMLDRVQRPS (61 aa). The segment at residues 72–91 is a DNA-binding region (H-T-H motif); it reads SMRRVAAELGTGTMSLYRYV.

It localises to the cytoplasm. With respect to regulation, daunorubicin and doxorubicin can induce dissociation of DrrR1 from its DNA complex. Ampicillin cannot release DrrR1 from the DNA complex at the same concentrations. In terms of biological role, transcriptional regulator that modulates the expression of the drrA2-drrB2 genes, which encode an ABC transporter involved in daunorubicin efflux, in response to intracellular daunorubicin/doxorubicin accumulation. In the absence of daunorubicin or doxorubicin, binds directly to the drrA2-drrB2 promoter region and negatively regulates expression of the genes. In the presence of daunorubicin or doxorubicin, DrrR1 dissociates from DNA, leading to the transcription of the genes. The polypeptide is HTH-type transcriptional repressor DrrR1 (Streptomyces coeruleorubidus).